The following is a 67-amino-acid chain: Large ribosomal subunit protein uL29 (67 aa).

Belongs to the universal ribosomal protein uL29 family.

The sequence is that of Large ribosomal subunit protein uL29 from Wolbachia sp. subsp. Drosophila simulans (strain wRi).